We begin with the raw amino-acid sequence, 77 residues long: Pi-stichotoxin-Hmg5a (77 aa).

Residues 1 to 21 (MDYQRLLFLFAVAMVITTTVA) form the signal peptide. Residues 22–34 (LPQDTALMDGQLQ) constitute a propeptide that is removed on maturation. Cystine bridges form between cysteine 40–cysteine 73, cysteine 42–cysteine 66, and cysteine 56–cysteine 74.

This sequence belongs to the sea anemone type 3 (BDS) potassium channel toxin family.

It is found in the secreted. The protein resides in the nematocyst. Toxin that inhibits rat ASIC3 channels (IC(50)=13.8 uM). Also able to bind T.californica muscle-type nicotinic acetylcholine receptors (nAChR), and human alpha-7/CHRNA7 nicotinic acetylcholine receptors. This is Pi-stichotoxin-Hmg5a from Heteractis magnifica (Magnificent sea anemone).